We begin with the raw amino-acid sequence, 399 residues long: P2X purinoceptor 1 (399 aa).

At 1–28 (MARRLQDELSAFFFEYDTPRMVLVRNKK) the chain is on the cytoplasmic side. A helical membrane pass occupies residues 29–50 (VGVIFRLIQLVVLVYVIGWVFV). The Extracellular portion of the chain corresponds to 51–338 (YEKGYQTSSG…IPTMTTIGSG (288 aa)). 3 residues coordinate CTP: K68, K70, and K140. K70 provides a ligand contact to ATP. Disulfide bonds link C117-C165, C126-C149, and C132-C159. N153 and N184 each carry an N-linked (GlcNAc...) asparagine glycan. A CTP-binding site is contributed by T186. T186 contributes to the ATP binding site. N210 carries an N-linked (GlcNAc...) asparagine glycan. 2 disulfides stabilise this stretch: C217-C227 and C261-C270. Residues S286, N290, and R292 each contribute to the ATP site. Residues N290 and R292 each coordinate CTP. N-linked (GlcNAc...) asparagine glycosylation occurs at N300. Residue K309 participates in CTP binding. K309 contacts ATP. A pore-forming motif region spans residues 331 to 338 (TMTTIGSG). Residues 339–358 (IGIFGVATVLCDLLLLHILP) form a helical membrane-spanning segment. The Cytoplasmic portion of the chain corresponds to 359-399 (KRHYYKQKKFKYAEDMGPGEGERDPAATSSTLGLQENMRTS). Positions 374–399 (MGPGEGERDPAATSSTLGLQENMRTS) are disordered. Positions 385–399 (ATSSTLGLQENMRTS) are enriched in polar residues. S387 and S388 each carry phosphoserine. Residue T389 is modified to Phosphothreonine.

It belongs to the P2X receptor family. Functional P2XRs are organized as homomeric and heteromeric trimers. Forms heterodimer with P2RX2. Forms heterodimer with P2RX4. Forms heterodimer with P2RX5. In terms of tissue distribution, expressed in smooth muscle of the bladder and arteries.

The protein localises to the cell membrane. It carries out the reaction Ca(2+)(in) = Ca(2+)(out). It catalyses the reaction K(+)(in) = K(+)(out). The enzyme catalyses Na(+)(in) = Na(+)(out). Its activity is regulated as follows. Activated by low concentrations of ATP (&lt;1 uM). Undergoes rapid desensitisation. Sensitives to the ATP agonist:alpha/beta-methylene-ATP. Modulated by cholesterol. ATP-gated nonselective transmembrane cation channel permeable to potassium, sodium and with relatively high calcium permeability. Furthermore, CTP functions as a weak affinity agonist for P2RX1. Plays a role in male fertility, bladder contraction and platelet aggregation. Specifically, plays an important role in neurogenic contraction of smooth muscle of the vas deferens, and therefore is essential for normal male reproductive function. In addition, contributes to smooth muscle contractions of the urinary bladder. On platelets, contributes to platelet activation and aggregation and thereby, also to thrombosis. On neutrophils, it is involved in chemotaxis and in mitigating the activation of circulating cells. This Mus musculus (Mouse) protein is P2X purinoceptor 1 (P2rx1).